The sequence spans 364 residues: Aminomethyltransferase (364 aa).

The protein belongs to the GcvT family. As to quaternary structure, the glycine cleavage system is composed of four proteins: P, T, L and H.

The enzyme catalyses N(6)-[(R)-S(8)-aminomethyldihydrolipoyl]-L-lysyl-[protein] + (6S)-5,6,7,8-tetrahydrofolate = N(6)-[(R)-dihydrolipoyl]-L-lysyl-[protein] + (6R)-5,10-methylene-5,6,7,8-tetrahydrofolate + NH4(+). In terms of biological role, the glycine cleavage system catalyzes the degradation of glycine. The protein is Aminomethyltransferase of Shewanella halifaxensis (strain HAW-EB4).